We begin with the raw amino-acid sequence, 1088 residues long: Probable cellulose synthase A catalytic subunit 9 [UDP-forming] (1088 aa).

Met1 carries the post-translational modification N-acetylmethionine. The Cytoplasmic portion of the chain corresponds to 1–283; it reads MNTGGRLIAG…RSSRINPYRM (283 aa). Positions 39, 42, 58, 61, 66, 69, 81, and 84 each coordinate Zn(2+). The RING-type; degenerate zinc finger occupies 39–85; it reads CKICRDEIELTDNGEPFIACNECAFPTCRPCYEYERREGNQACPQCG. The helical transmembrane segment at 284-304 threads the bilayer; sequence LIFCRLAILGLFFHYRILHPV. The Extracellular segment spans residues 305 to 306; the sequence is ND. Residues 307 to 327 traverse the membrane as a helical segment; that stretch reads AFGLWLTSVICEIWFAVSWIL. Residues 328–871 are Cytoplasmic-facing; that stretch reads DQFPKWYPIE…INSVVYPWTS (544 aa). 5 residues coordinate UDP-alpha-D-glucose: Ser366, Lys372, Glu373, Asp402, and Lys543. The active site involves Asp402. Residues Lys544 and Asp568 each coordinate Mn(2+). Residue Asp788 is part of the active site. Residues 872–892 form a helical membrane-spanning segment; that stretch reads LPLLVYCSLPAICLLTGKFIV. The Extracellular portion of the chain corresponds to 893–897; it reads PEISN. A helical transmembrane segment spans residues 898–918; that stretch reads YAGILFLLMFMSIAVTGILEM. At 919–933 the chain is on the cytoplasmic side; sequence QWGKIGIDDWWRNEQ. A helical transmembrane segment spans residues 934–954; the sequence is FWVIGGVSSHLFALFQGLLKV. Residues 955–983 lie on the Extracellular side of the membrane; that stretch reads LAGVSTNFTVTSKAADDGEFSELYIFKWT. A glycan (N-linked (GlcNAc...) asparagine) is linked at Asn961. A helical membrane pass occupies residues 984–1004; sequence SLLIPPTTLLIINIVGVIVGV. Topologically, residues 1005-1015 are cytoplasmic; sequence SDAINNGYDSW. A helical membrane pass occupies residues 1016-1036; that stretch reads GPLFGRLFFALWVIVHLYPFL. Over 1037–1045 the chain is Extracellular; the sequence is KGLLGKQDR. Residues 1046 to 1066 form a helical membrane-spanning segment; it reads VPTIILVWSILLASILTLLWV. The Cytoplasmic portion of the chain corresponds to 1067-1088; it reads RVNPFVSKDGPVLEICGLDCLK.

Belongs to the glycosyltransferase 2 family. Plant cellulose synthase subfamily. Mn(2+) is required as a cofactor. The cofactor is Zn(2+). In terms of tissue distribution, expressed in young plants, stems and flowers.

The protein localises to the cell membrane. It catalyses the reaction [(1-&gt;4)-beta-D-glucosyl](n) + UDP-alpha-D-glucose = [(1-&gt;4)-beta-D-glucosyl](n+1) + UDP + H(+). It participates in glycan metabolism; plant cellulose biosynthesis. Functionally, probable catalytic subunit of cellulose synthase terminal complexes ('rosettes'), required for beta-1,4-glucan microfibril crystallization, a major mechanism of the cell wall formation. The chain is Probable cellulose synthase A catalytic subunit 9 [UDP-forming] from Arabidopsis thaliana (Mouse-ear cress).